The primary structure comprises 471 residues: Sulfate adenylyltransferase subunit 1 (471 aa).

Positions 22–239 constitute a tr-type G domain; sequence KDMLRFLTCG…NIEIGEDDNL (218 aa). The segment at 31 to 38 is G1; that stretch reads GSVDDGKS. GTP is bound at residue 31 to 38; sequence GSVDDGKS. A G2 region spans residues 89–93; that stretch reads GITID. The segment at 110–113 is G3; it reads DTPG. GTP contacts are provided by residues 110 to 114 and 165 to 168; these read DTPGH and NKMD. The G4 stretch occupies residues 165–168; sequence NKMD. The interval 202 to 204 is G5; sequence SAL.

The protein belongs to the TRAFAC class translation factor GTPase superfamily. Classic translation factor GTPase family. CysN/NodQ subfamily. In terms of assembly, heterodimer composed of CysD, the smaller subunit, and CysN.

The enzyme catalyses sulfate + ATP + H(+) = adenosine 5'-phosphosulfate + diphosphate. It functions in the pathway sulfur metabolism; hydrogen sulfide biosynthesis; sulfite from sulfate: step 1/3. Functionally, with CysD forms the ATP sulfurylase (ATPS) that catalyzes the adenylation of sulfate producing adenosine 5'-phosphosulfate (APS) and diphosphate, the first enzymatic step in sulfur assimilation pathway. APS synthesis involves the formation of a high-energy phosphoric-sulfuric acid anhydride bond driven by GTP hydrolysis by CysN coupled to ATP hydrolysis by CysD. In Alteromonas mediterranea (strain DSM 17117 / CIP 110805 / LMG 28347 / Deep ecotype), this protein is Sulfate adenylyltransferase subunit 1.